A 538-amino-acid polypeptide reads, in one-letter code: ESX-3 secretion system ATPase EccB3 (538 aa).

Residues 1 to 16 are compositionally biased toward basic and acidic residues; that stretch reads MTNQQHDHDFDHDRRS. The interval 1–25 is disordered; it reads MTNQQHDHDFDHDRRSFASRTPVNN. A helical membrane pass occupies residues 75-95; sequence VLMGVLIVITGLIGSFVFSLI.

It belongs to the EccB family. Part of the ESX-3 / type VII secretion system (T7SS), which is composed of cytosolic and membrane components. The ESX-3 membrane complex is composed of EccB3, EccC3, EccD3 and EccE3.

It is found in the cell inner membrane. An ATPase. Part of the ESX-3 specialized secretion system, which is important for iron and zinc uptake or homeostasis. The sequence is that of ESX-3 secretion system ATPase EccB3 from Mycobacterium tuberculosis (strain CDC 1551 / Oshkosh).